The primary structure comprises 972 residues: RNA polymerase-associated protein RapA (972 aa).

The region spanning 164 to 334 (EVGRRYAPRV…FARLRLLDPD (171 aa)) is the Helicase ATP-binding domain. 177–184 (DEVGLGKT) is an ATP binding site. The DEAH box signature appears at 280-283 (DEAH). The Helicase C-terminal domain maps to 493–671 (RVNWLLEMLK…HEPEALENLI (179 aa)).

The protein belongs to the SNF2/RAD54 helicase family. RapA subfamily. Interacts with the RNAP. Has a higher affinity for the core RNAP than for the holoenzyme. Its ATPase activity is stimulated by binding to RNAP.

Functionally, transcription regulator that activates transcription by stimulating RNA polymerase (RNAP) recycling in case of stress conditions such as supercoiled DNA or high salt concentrations. Probably acts by releasing the RNAP, when it is trapped or immobilized on tightly supercoiled DNA. Does not activate transcription on linear DNA. Probably not involved in DNA repair. This is RNA polymerase-associated protein RapA from Photobacterium profundum (strain SS9).